The chain runs to 504 residues: Cytochrome P450 monooxygenase gsfF (504 aa).

A signal peptide spans M1–G16. N-linked (GlcNAc...) asparagine glycans are attached at residues N97 and N150. A heme-binding site is contributed by C450.

Belongs to the cytochrome P450 family. Heme serves as cofactor.

The enzyme catalyses griseophenone B + reduced [NADPH--hemoprotein reductase] + O2 + H(+) = desmethyl-dehydrogriseofulvin + oxidized [NADPH--hemoprotein reductase] + 2 H2O. It participates in secondary metabolite biosynthesis; terpenoid biosynthesis. Cytochrome P450 monooxygenase; part of the gene cluster that mediates the biosynthesis of griseofulvin, an important antifungal drug that has been in use for a long time for treating dermatophyte infections. The first step of the pathway is the formation of the heptaketide backbone by gsfA which is initiated by priming with acetyl-CoA, followed by sequential condensations of 6 malonyl-CoA units. The resulting benzophenone can undergo a spontaneous dehydration to form norlichexanthone. However, the true precursor for the griseofulvin biosynthesis is not norlichexanthone, but the heptaketide benzophenone that is O-methylated at 3-OH by gsfB to produce griseophenone D which is further methylated at 9-OH by gsfC to yield griseophenone C. Griseophenone C is then substrate of halogenase gsfI which is responsible for the regio-specific chlorination at the C13 position to form griseophenone B. The cytochrome P450 gsfF catalyzes the coupling of orcinol and phloroglucinol rings in griseophenone B to form desmethyl-dehydrogriseofulvin A which is further methylated at 5-OH by gsfD to yield dehydrogriseofulvin. Finally, gsfE performs stereospecific reduction of enone 18 of dehydrogriseofulvin to afford the final product griseofulvin. The polypeptide is Cytochrome P450 monooxygenase gsfF (Penicillium aethiopicum).